Reading from the N-terminus, the 403-residue chain is Casein kinase I isoform delta-A (403 aa).

A Protein kinase domain is found at 9–277 (YRLGRKIGSG…YLRQLFRNLF (269 aa)). Residues 15–23 (IGSGSFGDI) and Lys38 each bind ATP. Asp128 serves as the catalytic Proton acceptor. The segment at 315 to 340 (QGRIPLPRVMLPTSSGRPRGTQEVAP) is autoinhibitory. The interval 322 to 403 (RVMLPTSSGR…PSGLQSAVPR (82 aa)) is disordered.

It belongs to the protein kinase superfamily. As to quaternary structure, monomer. Interacts with per1 and per2. Component of the circadian core oscillator. In terms of processing, autophosphorylated on serine and threonine residues.

The protein localises to the cytoplasm. The protein resides in the nucleus. It catalyses the reaction L-seryl-[protein] + ATP = O-phospho-L-seryl-[protein] + ADP + H(+). The catalysed reaction is L-threonyl-[protein] + ATP = O-phospho-L-threonyl-[protein] + ADP + H(+). Exhibits substrate-dependent heparin activation. Functionally, casein kinases are operationally defined by their preferential utilization of acidic proteins such as caseins as substrates. Central component of the circadian clock. May act as a negative regulator of circadian rhythmicity by phosphorylating per1 and per2, which may lead to their degradation. Participates in wnt signaling. The polypeptide is Casein kinase I isoform delta-A (csnk1da) (Danio rerio (Zebrafish)).